A 313-amino-acid chain; its full sequence is Ribonuclease HIII (313 aa).

The segment at 62–88 (AERWTADAETPAPKKPASKKSIPSVYQ) is disordered. The RNase H type-2 domain maps to 96 to 312 (MSVIGSDEVG…TQKAKRIASK (217 aa)). A divalent metal cation is bound by residues Asp-102, Glu-103, and Asp-207.

Belongs to the RNase HII family. RnhC subfamily. The cofactor is Mn(2+). Requires Mg(2+) as cofactor.

It localises to the cytoplasm. It catalyses the reaction Endonucleolytic cleavage to 5'-phosphomonoester.. Endonuclease that specifically degrades the RNA of RNA-DNA hybrids. The chain is Ribonuclease HIII from Bacillus licheniformis (strain ATCC 14580 / DSM 13 / JCM 2505 / CCUG 7422 / NBRC 12200 / NCIMB 9375 / NCTC 10341 / NRRL NRS-1264 / Gibson 46).